Here is a 382-residue protein sequence, read N- to C-terminus: MGLTFWKVFLILNCLAGQVNGVQVTIPDSFVNVTVGSDVTLICTYATTVASLNKLSIQWTFFHKEASQPVSIYYSEGGQATAIGKFKDRIVGSNTSGNASITISHMQPEDSGIYICDVNNPTDFFGKNQGTISVSVLVKPSKPFCSIQGIAETGHPISLTCLSVLGTPSPVYYWYKLEGRNIVPVKENFNPATGILFIGNLTTFEQGYYQCTAINILGNSSCEIDLTTPYPGIGIIVGAFVGTLIGVIIIISVVWFVRRKVKAKGKERKRNSKTTTELEPMTKINQRTEGETMPREDAIQLEATLPSSTHETEPNATLGPDHEPIPEPEPALQPTVEPPSGPELVPMSELEIQLEPEPAPQQEPEPLIVDEPFCDEEKVIKP.

A signal peptide spans 1–21 (MGLTFWKVFLILNCLAGQVNG). Positions 22–133 (VQVTIPDSFV…FFGKNQGTIS (112 aa)) constitute an Ig-like V-type domain. The Extracellular segment spans residues 22–234 (VQVTIPDSFV…DLTTPYPGIG (213 aa)). A glycan (N-linked (GlcNAc...) asparagine) is linked at Asn-32. Cystine bridges form between Cys-43-Cys-116 and Cys-161-Cys-211. The 88-residue stretch at 140-227 (PSKPFCSIQG…GNSSCEIDLT (88 aa)) folds into the Ig-like C2-type domain. N-linked (GlcNAc...) asparagine glycans are attached at residues Asn-200 and Asn-219. A helical membrane pass occupies residues 235-255 (IIVGAFVGTLIGVIIIISVVW). Residues 256–382 (FVRRKVKAKG…FCDEEKVIKP (127 aa)) lie on the Cytoplasmic side of the membrane. The disordered stretch occupies residues 266-382 (KERKRNSKTT…FCDEEKVIKP (117 aa)). The span at 273 to 285 (KTTTELEPMTKIN) shows a compositional bias: polar residues. A compositionally biased stretch (basic and acidic residues) spans 286–298 (QRTEGETMPREDA). Positions 327 to 341 (EPEPALQPTVEPPSG) are enriched in pro residues.

It is found in the membrane. The protein is V-set and immunoglobulin domain-containing protein 1 (VSIG1) of Bos taurus (Bovine).